A 360-amino-acid chain; its full sequence is MFVDSVEIIIASGKGGPGMVSFRREKFVIKGGPDGGDGGDGGDVYFEVDNNTDTLASFRGTKHHKAKNGAPGGTRNCAGKKGEDKIIVVPPGTQVFVDDALWLDLVEPKERVLALKGGKGGLGNAHFKSATKQQPTYAQKGLEGVEKCVRLELKLIADIGLVGFPNAGKSTLISTISNAKPKIANYEFTTLVPNLGVVSVDEKSEFLMADIPGIIEGASEGKGLGISFLKHIERTKVLAFVLDASRLDLGIKEQYQRLRLELEKFSPALANKPFGVLLNKCDVVENIDEMAKDFCTFLNLEAQKLEAFGLEPYLGFLHPHLTSDFENNPNEKSALFVLPLSALSALNTHALKFVLLEALP.

Residues 1 to 156 (MFVDSVEIII…KCVRLELKLI (156 aa)) enclose the Obg domain. Residues 157–360 (ADIGLVGFPN…LKFVLLEALP (204 aa)) enclose the OBG-type G domain. Residues 163–170 (GFPNAGKS), 188–192 (FTTLV), 210–213 (DIPG), 279–282 (NKCD), and 341–343 (SAL) contribute to the GTP site. 2 residues coordinate Mg(2+): S170 and T190.

The protein belongs to the TRAFAC class OBG-HflX-like GTPase superfamily. OBG GTPase family. In terms of assembly, monomer. Mg(2+) serves as cofactor.

Its subcellular location is the cytoplasm. Its function is as follows. An essential GTPase which binds GTP, GDP and possibly (p)ppGpp with moderate affinity, with high nucleotide exchange rates and a fairly low GTP hydrolysis rate. Plays a role in control of the cell cycle, stress response, ribosome biogenesis and in those bacteria that undergo differentiation, in morphogenesis control. This chain is GTPase Obg, found in Helicobacter pylori (strain Shi470).